The following is a 2096-amino-acid chain: Tudor domain-containing protein 6 (2096 aa).

Residues 65-120 (ASASPGELCLVQVGLLWHRCRVVSRQAQESRVFLLDEGRTITAGAGSLAPGRREFF) enclose the Tudor 1 domain. Residues 287–316 (YRGSTGTGDENSTSATWEEREESPDKPGSP) are disordered. Polar residues predominate over residues 288–302 (RGSTGTGDENSTSAT). Residue T293 is modified to Phosphothreonine. 6 Tudor domains span residues 310–369 (PDKP…YFRM), 536–593 (KPEP…FRQL), 816–875 (HQRN…FLKV), 1033–1088 (PLNP…AYDV), 1352–1411 (PLQR…NAIL), and 1567–1626 (CPYI…ELLS). Phosphoserine occurs at positions 1722 and 2062. The Tudor 8 domain maps to 2026–2084 (AFTVGSKCVVWSSLRNTWSKCEILETAEEGTRVLNLSNGMEEIVNPENVWNGIPKLDKS).

As to quaternary structure, found in a mRNP complex (i.e. messenger ribonucleoproteins which correspond to mRNA with bound proteins), at least composed of TDRD1, TDRD6, TDRD7 and DDX4. Found in a complex, at least composed of PIWIL1, PIWIL2, DDX4 and TDRD6. Interacts with Tex19.1 and probably Tex19.2. Interacts with PRMT5. Interacts with SNRPB (when methylated); to trigger spliceosome formation. Post-translationally, undergoes proteolytic cleavage near the C-terminal by an unknown protease during the transition from meiosis I to meiosis II in primary spermatocytes.

It is found in the cytoplasm. Functionally, tudor domain-containing protein involved in germ cell development, more specifically the formation of chromatoid body (during spermiogenesis), Balbiani body (during oogenesis), germ plasm (upon fertilization), and for proper miRNA expression and spliceosome maturation. Essential for RNA-dependent helicase UPF1 localization to chromatoid body, for UPF1-UPF2 and UPF1-DDX4 interactions which are required for mRNA degradation, using the extended 3' UTR-triggered nonsense-mediated mRNA decay (NMD) pathway. Involved in spliceosome maturation and mRNA splicing in prophase I spermatocytes through interaction with arginine N-methyltransferase PRMT5 and symmetrically arginine dimethylated SNRPB (small nuclear ribonucleoprotein-associated protein). In Homo sapiens (Human), this protein is Tudor domain-containing protein 6.